A 145-amino-acid chain; its full sequence is D-aminoacyl-tRNA deacylase (145 aa).

Residues 137–138 (GP) carry the Gly-cisPro motif, important for rejection of L-amino acids motif.

It belongs to the DTD family. In terms of assembly, homodimer.

It is found in the cytoplasm. The catalysed reaction is glycyl-tRNA(Ala) + H2O = tRNA(Ala) + glycine + H(+). It carries out the reaction a D-aminoacyl-tRNA + H2O = a tRNA + a D-alpha-amino acid + H(+). Functionally, an aminoacyl-tRNA editing enzyme that deacylates mischarged D-aminoacyl-tRNAs. Also deacylates mischarged glycyl-tRNA(Ala), protecting cells against glycine mischarging by AlaRS. Acts via tRNA-based rather than protein-based catalysis; rejects L-amino acids rather than detecting D-amino acids in the active site. By recycling D-aminoacyl-tRNA to D-amino acids and free tRNA molecules, this enzyme counteracts the toxicity associated with the formation of D-aminoacyl-tRNA entities in vivo and helps enforce protein L-homochirality. This Photorhabdus laumondii subsp. laumondii (strain DSM 15139 / CIP 105565 / TT01) (Photorhabdus luminescens subsp. laumondii) protein is D-aminoacyl-tRNA deacylase.